The following is a 757-amino-acid chain: Dapper homolog 2 (757 aa).

The inhibition of Nodal signaling stretch occupies residues 1 to 281 (MWAPSGQGPA…QSPLFALPKE (281 aa)). The stretch at 55–107 (RGQELRLEAALTALREQLSRLRRQDAGLKTHLDQLDQQISELQLDVSRSSCEA) forms a coiled coil. 3 disordered regions span residues 486 to 540 (RRRV…CSES), 584 to 684 (RWQS…EGCF), and 696 to 728 (AEAG…PPVP). 2 stretches are compositionally biased toward basic and acidic residues: residues 505-516 (ERQRVTERDPSR) and 631-644 (ACAR…EHSA). The segment covering 645-656 (DCTSLYHSTIAE) has biased composition (polar residues). A compositionally biased stretch (basic and acidic residues) spans 664–673 (SDHTANRFGD). The short motif at 754-757 (MTMV) is the PDZ-binding element.

This sequence belongs to the dapper family. Can form homodimers and heterodimers with DACT1 or DACT3. Interacts with CSNK1D, PKA catalytic subunit, PKC-type kinase, CSNK2B, DVL1, DVL2, DVL3, VANGL1, VANGL2, TGFBR1, CTNNB1, CTNND2, CTNND1, LEF1, TCF7, TCF7L1 and HDAC1. As to expression, expressed in kidney (inner medullary collecting duct). Expressed in epidermal keratinocytes and hair follicles.

Involved in regulation of intracellular signaling pathways during development. Negatively regulates the Nodal signaling pathway, possibly by promoting the lysosomal degradation of Nodal receptors, such as TGFBR1. May be involved in control of the morphogenetic behavior of kidney ureteric bud cells by keeping cells epithelial and restraining their mesenchymal character. May play an inhibitory role in the re-epithelialization of skin wounds by attenuating TGF-beta signaling. This Mus musculus (Mouse) protein is Dapper homolog 2 (Dact2).